A 334-amino-acid chain; its full sequence is 4-hydroxyproline 2-epimerase (334 aa).

The Proton acceptor role is filled by Cys-91. Residues 92–93 (GH), His-224, and Asp-250 contribute to the substrate site. The active-site Proton donor is the Cys-254. Substrate is bound at residue 255–256 (GT).

This sequence belongs to the proline racemase family.

The enzyme catalyses trans-4-hydroxy-L-proline = cis-4-hydroxy-D-proline. Catalyzes the epimerization of trans-4-hydroxy-L-proline (t4LHyp) to cis-4-hydroxy-D-proline (c4DHyp). Is likely involved in a degradation pathway that converts t4LHyp to alpha-ketoglutarate. Displays no proline racemase activity. The chain is 4-hydroxyproline 2-epimerase from Spirosoma linguale (strain ATCC 33905 / DSM 74 / LMG 10896 / Claus 1).